A 1147-amino-acid polypeptide reads, in one-letter code: Myosin light chain kinase, smooth muscle (1147 aa).

Residues 1–41 (MDFRANLQRQVKPKTVSEEERKVHSPQQVDFRSVLAKKGTP) form an actin-binding region. The disordered stretch occupies residues 1-330 (MDFRANLQRQ…PPASPGTAPT (330 aa)). The calmodulin-binding stretch occupies residues 26–41 (PQQVDFRSVLAKKGTP). A compositionally biased stretch (pro residues) spans 43–55 (TPVPEKAPPPKPA). Repeat copies occupy residues 100–111 (SLKPVANAKPAE) and 112–123 (TLKPVANTKPAE). The interval 100–288 (SLKPVANAKP…KAVANAKPAE (189 aa)) is 16 X 12 AA tandem repeats. The stretch at 124-132 (TLKPVANAE) is one 3; truncated repeat. A run of 13 repeats spans residues 133-144 (TLKPMGNAKPAE), 145-156 (SSKPVGNTKPAE), 157-168 (TLKPVGNTKPAE), 169-180 (TLKPVGNIKPAE), 181-192 (TLKPVGNIKPAE), 193-204 (TLKPVGNTKPTE), 205-216 (TLKPVANAKSAE), 217-228 (TLKPIANTKPAE), 229-240 (TLKPVGNAKPAE), 241-252 (TLKPVGNAKPAE), 253-264 (TLKPVGNAKPAE), 265-276 (TLKPVGNAKPAE), and 277-288 (TLKAVANAKPAE). An actin-binding (calcium/calmodulin-insensitive) region spans residues 292–692 (PAGKEELKKE…TVTVNTEQKV (401 aa)). The segment covering 293-320 (AGKEELKKEVQNDVNCKREKAGAADNEK) has biased composition (basic and acidic residues). Ig-like C2-type domains lie at 329–417 (PTFK…CHVT) and 469–557 (PQIP…VNLT). Cysteines 350 and 401 form a disulfide. 2 disordered regions span residues 424–476 (SENA…QFPE) and 644–678 (SEPS…KEPE). Pro residues predominate over residues 459–472 (PKTPPKAATPPQIP). A Fibronectin type-III domain is found at 565-657 (PAGTPCASDI…QESELTTVGE (93 aa)). The span at 644-653 (SEPSQESELT) shows a compositional bias: polar residues. The segment covering 662 to 677 (PKDEVEEVSDDDEKEP) has biased composition (acidic residues). Ser670 carries the post-translational modification Phosphoserine. A Phosphotyrosine; by ABL1 modification is found at Tyr681. One can recognise a Protein kinase domain in the interval 696 to 951 (YDIEERLGSG…CTQCLQHPWL (256 aa)). Residues 702 to 710 (LGSGKFGQV) and Lys725 contribute to the ATP site. Residue Tyr807 is modified to Phosphotyrosine; by ABL1. Asp817 functions as the Proton acceptor in the catalytic mechanism. Tyr867 is subject to Phosphotyrosine; by ABL1. The interval 943-1006 (TQCLQHPWLM…SGLSGRKSST (64 aa)) is calmodulin-binding. 5 positions are modified to phosphoserine: Ser991, Ser992, Ser1004, Ser1005, and Ser1008. The disordered stretch occupies residues 999–1019 (LSGRKSSTGSPTSPLTAERLE). Polar residues predominate over residues 1002–1013 (RKSSTGSPTSPL). A Phosphothreonine modification is found at Thr1010. Phosphoserine is present on Ser1011. Residues 1041-1130 (PYFSKTIRDL…GEATCTAELI (90 aa)) enclose the Ig-like C2-type 3 domain. Residues Cys1062 and Cys1114 are joined by a disulfide bond.

Belongs to the protein kinase superfamily. CAMK Ser/Thr protein kinase family. All isoforms including Telokin bind calmodulin. Interacts with SVIL. Interacts with CTTN; this interaction is reduced during thrombin-induced endothelial cell (EC) contraction but is promoted by the barrier-protective agonist sphingosine 1-phosphate (S1P) within lamellipodia. A complex made of ABL1, CTTN and MYLK regulates cortical actin-based cytoskeletal rearrangement critical to sphingosine 1-phosphate (S1P)-mediated endothelial cell (EC) barrier enhancement. Binds to NAA10/ARD1 and PTK2B/PYK2. Mg(2+) is required as a cofactor. Ca(2+) serves as cofactor. Post-translationally, the C-terminus is deglutamylated by AGTPBP1/CCP1, AGBL1/CCP4 and AGBL4/CCP6, leading to the formation of Myosin light chain kinase, smooth muscle, deglutamylated form. The consequences of C-terminal deglutamylation are unknown. Can probably be down-regulated by phosphorylation. Tyrosine phosphorylation by ABL1 increases kinase activity, reverses MLCK-mediated inhibition of Arp2/3-mediated actin polymerization, and enhances CTTN-binding. Phosphorylation by SRC promotes CTTN binding. Isoform Telokin is found in all smooth muscle tested except the aorta. It is not present in non-muscle tissue.

It is found in the cytoplasm. The protein resides in the cell projection. It localises to the lamellipodium. Its subcellular location is the cleavage furrow. The protein localises to the cytoskeleton. It is found in the stress fiber. It carries out the reaction L-seryl-[myosin light chain] + ATP = O-phospho-L-seryl-[myosin light chain] + ADP + H(+). The catalysed reaction is L-threonyl-[myosin light chain] + ATP = O-phospho-L-threonyl-[myosin light chain] + ADP + H(+). Its activity is regulated as follows. All catalytically active isoforms require binding to calcium and calmodulin for activation. Its function is as follows. Calcium/calmodulin-dependent myosin light chain kinase implicated in smooth muscle contraction via phosphorylation of myosin light chains (MLC). Also regulates actin-myosin interaction through a non-kinase activity. Phosphorylates PTK2B/PYK2 and myosin light-chains. Involved in the inflammatory response (e.g. apoptosis, vascular permeability, leukocyte diapedesis), cell motility and morphology, airway hyperreactivity and other activities relevant to asthma. Required for tonic airway smooth muscle contraction that is necessary for physiological and asthmatic airway resistance. Necessary for gastrointestinal motility. Implicated in the regulation of endothelial as well as vascular permeability, probably via the regulation of cytoskeletal rearrangements. In the nervous system it has been shown to control the growth initiation of astrocytic processes in culture and to participate in transmitter release at synapses formed between cultured sympathetic ganglion cells. Critical participant in signaling sequences that result in fibroblast apoptosis. Plays a role in the regulation of epithelial cell survival. Required for epithelial wound healing, especially during actomyosin ring contraction during purse-string wound closure. Mediates RhoA-dependent membrane blebbing. Triggers TRPC5 channel activity in a calcium-dependent signaling, by inducing its subcellular localization at the plasma membrane. Promotes cell migration (including tumor cells) and tumor metastasis. PTK2B/PYK2 activation by phosphorylation mediates ITGB2 activation and is thus essential to trigger neutrophil transmigration during acute lung injury (ALI). May regulate optic nerve head astrocyte migration. Probably involved in mitotic cytoskeletal regulation. Regulates tight junction probably by modulating ZO-1 exchange in the perijunctional actomyosin ring. Mediates burn-induced microvascular barrier injury; triggers endothelial contraction in the development of microvascular hyperpermeability by phosphorylating MLC. Essential for intestinal barrier dysfunction. Mediates Giardia spp.-mediated reduced epithelial barrier function during giardiasis intestinal infection via reorganization of cytoskeletal F-actin and tight junctional ZO-1. Necessary for hypotonicity-induced Ca(2+) entry and subsequent activation of volume-sensitive organic osmolyte/anion channels (VSOAC) in cervical cancer cells. This chain is Myosin light chain kinase, smooth muscle (MYLK), found in Oryctolagus cuniculus (Rabbit).